A 194-amino-acid chain; its full sequence is Segregation and condensation protein B (194 aa).

This sequence belongs to the ScpB family. As to quaternary structure, homodimer. Homodimerization may be required to stabilize the binding of ScpA to the Smc head domains. Component of a cohesin-like complex composed of ScpA, ScpB and the Smc homodimer, in which ScpA and ScpB bind to the head domain of Smc. The presence of the three proteins is required for the association of the complex with DNA.

The protein resides in the cytoplasm. Participates in chromosomal partition during cell division. May act via the formation of a condensin-like complex containing Smc and ScpA that pull DNA away from mid-cell into both cell halves. This Streptococcus agalactiae serotype Ia (strain ATCC 27591 / A909 / CDC SS700) protein is Segregation and condensation protein B.